Reading from the N-terminus, the 358-residue chain is Fructose-bisphosphate aldolase (358 aa).

Residue Ser-62 coordinates D-glyceraldehyde 3-phosphate. Asp-109 serves as the catalytic Proton donor. Zn(2+) is bound by residues His-110, Asp-144, Glu-174, and His-226. A dihydroxyacetone phosphate-binding site is contributed by Gly-227. His-264 serves as a coordination point for Zn(2+). Dihydroxyacetone phosphate contacts are provided by residues 265–267 (GGS) and 286–289 (NIDT).

Belongs to the class II fructose-bisphosphate aldolase family. It depends on Zn(2+) as a cofactor.

It carries out the reaction beta-D-fructose 1,6-bisphosphate = D-glyceraldehyde 3-phosphate + dihydroxyacetone phosphate. It participates in carbohydrate degradation; glycolysis; D-glyceraldehyde 3-phosphate and glycerone phosphate from D-glucose: step 4/4. In terms of biological role, catalyzes the aldol condensation of dihydroxyacetone phosphate (DHAP or glycerone-phosphate) with glyceraldehyde 3-phosphate (G3P) to form fructose 1,6-bisphosphate (FBP) in gluconeogenesis and the reverse reaction in glycolysis. This chain is Fructose-bisphosphate aldolase (fba), found in Edwardsiella ictaluri (strain 93-146).